An 823-amino-acid polypeptide reads, in one-letter code: DNA ligase (823 aa).

NAD(+)-binding positions include 31–35 (DDAFD) and 73–74 (SQ). Lysine 100 (N6-AMP-lysine intermediate) is an active-site residue. Positions 121, 163, 275, and 296 each coordinate NAD(+). Zn(2+) is bound by residues cysteine 387, cysteine 390, cysteine 403, and cysteine 408. 3 consecutive BRCT domains span residues 562–655 (QAES…TGET), 654–742 (ETVH…DAHV), and 741–823 (HVHA…TPGT).

This sequence belongs to the NAD-dependent DNA ligase family. LigA subfamily. Requires Mg(2+) as cofactor. It depends on Mn(2+) as a cofactor.

It catalyses the reaction NAD(+) + (deoxyribonucleotide)n-3'-hydroxyl + 5'-phospho-(deoxyribonucleotide)m = (deoxyribonucleotide)n+m + AMP + beta-nicotinamide D-nucleotide.. In terms of biological role, DNA ligase that catalyzes the formation of phosphodiester linkages between 5'-phosphoryl and 3'-hydroxyl groups in double-stranded DNA using NAD as a coenzyme and as the energy source for the reaction. It is essential for DNA replication and repair of damaged DNA. In Treponema pallidum (strain Nichols), this protein is DNA ligase.